A 333-amino-acid chain; its full sequence is UPF0285 protein MTH_1441 (333 aa).

Belongs to the UPF0285 family.

The sequence is that of UPF0285 protein MTH_1441 from Methanothermobacter thermautotrophicus (strain ATCC 29096 / DSM 1053 / JCM 10044 / NBRC 100330 / Delta H) (Methanobacterium thermoautotrophicum).